The following is a 193-amino-acid chain: Thymidine kinase (193 aa).

ATP-binding positions include 14–21 (GCMFSGKT) and 87–90 (DELH). E88 acts as the Proton acceptor in catalysis. Zn(2+)-binding residues include C147, C150, C185, and C188.

This sequence belongs to the thymidine kinase family. As to quaternary structure, homotetramer.

The protein localises to the cytoplasm. The enzyme catalyses thymidine + ATP = dTMP + ADP + H(+). The sequence is that of Thymidine kinase from Roseiflexus sp. (strain RS-1).